Reading from the N-terminus, the 127-residue chain is Small ribosomal subunit protein uS11 (127 aa).

The protein belongs to the universal ribosomal protein uS11 family. As to quaternary structure, part of the 30S ribosomal subunit. Interacts with proteins S7 and S18. Binds to IF-3.

Its function is as follows. Located on the platform of the 30S subunit, it bridges several disparate RNA helices of the 16S rRNA. Forms part of the Shine-Dalgarno cleft in the 70S ribosome. In Rickettsia bellii (strain RML369-C), this protein is Small ribosomal subunit protein uS11.